A 390-amino-acid chain; its full sequence is Queuine tRNA-ribosyltransferase (390 aa).

D92 functions as the Proton acceptor in the catalytic mechanism. Substrate-binding positions include 92–96 (DSGGF), D146, Q195, and G222. The RNA binding stretch occupies residues 253 to 259 (GVGTPED). D272 acts as the Nucleophile in catalysis. The tract at residues 277-281 (TRNAR) is RNA binding; important for wobble base 34 recognition. The Zn(2+) site is built by C310, C312, C315, and H354.

It belongs to the queuine tRNA-ribosyltransferase family. As to quaternary structure, homodimer. Within each dimer, one monomer is responsible for RNA recognition and catalysis, while the other monomer binds to the replacement base PreQ1. The cofactor is Zn(2+).

The enzyme catalyses 7-aminomethyl-7-carbaguanine + guanosine(34) in tRNA = 7-aminomethyl-7-carbaguanosine(34) in tRNA + guanine. Its pathway is tRNA modification; tRNA-queuosine biosynthesis. Functionally, catalyzes the base-exchange of a guanine (G) residue with the queuine precursor 7-aminomethyl-7-deazaguanine (PreQ1) at position 34 (anticodon wobble position) in tRNAs with GU(N) anticodons (tRNA-Asp, -Asn, -His and -Tyr). Catalysis occurs through a double-displacement mechanism. The nucleophile active site attacks the C1' of nucleotide 34 to detach the guanine base from the RNA, forming a covalent enzyme-RNA intermediate. The proton acceptor active site deprotonates the incoming PreQ1, allowing a nucleophilic attack on the C1' of the ribose to form the product. After dissociation, two additional enzymatic reactions on the tRNA convert PreQ1 to queuine (Q), resulting in the hypermodified nucleoside queuosine (7-(((4,5-cis-dihydroxy-2-cyclopenten-1-yl)amino)methyl)-7-deazaguanosine). This is Queuine tRNA-ribosyltransferase from Verminephrobacter eiseniae (strain EF01-2).